Here is a 418-residue protein sequence, read N- to C-terminus: Transmembrane protease serine 11D (418 aa).

The Cytoplasmic segment spans residues 1 to 20 (MYRPARVTSTSRFLNPYVVC). The helical; Signal-anchor for type II membrane protein transmembrane segment at 21–41 (FIVVAGVVILAVTIALLVYFL) threads the bilayer. Over 42–418 (AFDQKSYFYR…LDWIRQQTGI (377 aa)) the chain is Extracellular. An SEA domain is found at 46–163 (KSYFYRSSFQ…STEITSLTDQ (118 aa)). An N-linked (GlcNAc...) asparagine glycan is attached at asparagine 144. Cystine bridges form between cysteine 173–cysteine 292, cysteine 212–cysteine 228, cysteine 337–cysteine 353, and cysteine 364–cysteine 393. The region spanning 187-417 (ILGGTEAEEG…YLDWIRQQTG (231 aa)) is the Peptidase S1 domain. Residues histidine 227 and aspartate 272 each act as charge relay system in the active site. Serine 368 serves as the catalytic Charge relay system.

Belongs to the peptidase S1 family. Monomer. Located in the cells of the submucosal serous glands of the bronchi and trachea.

Its subcellular location is the cell membrane. It is found in the secreted. With respect to regulation, strongly inhibited by diisopropyl fluorophosphate, leupeptin, antipain, aprotinin, and soybean trypsin inhibitor, but hardly inhibited by secretory leukocyte protease inhibitor at 10 microM. Its function is as follows. May play some biological role in the host defense system on the mucous membrane independently of or in cooperation with other substances in airway mucous or bronchial secretions. Plays a role in the proteolytic processing of ACE2. Proteolytically cleaves and activates the human coronavirus 229E (HCoV-229E) spike glycoprotein which facilitate virus-cell membrane fusions; spike proteins are synthesized and maintained in precursor intermediate folding states and proteolysis permits the refolding and energy release required to create stable virus-cell linkages and membrane coalescence. Preferentially cleaves the C-terminal side of arginine residues at the P1 position of certain peptides, cleaving Boc-Phe-Ser-Arg-4-methylcoumaryl-7-amide most efficiently and having an optimum pH of 8.6 with this substrate. The polypeptide is Transmembrane protease serine 11D (TMPRSS11D) (Homo sapiens (Human)).